We begin with the raw amino-acid sequence, 267 residues long: PF03932 family protein CutC (267 aa).

The protein belongs to the CutC family.

It is found in the cytoplasm. The protein is PF03932 family protein CutC of Xylella fastidiosa (strain Temecula1 / ATCC 700964).